The chain runs to 598 residues: MKHIRNFCIIAHIDHGKSTLADRLLGATQTVTAREEKAQLLDNMDLERERGITIKSHAIQMEYTYQGQEYILNLIDTPGHVDFSYEVSRSIAACEGALLIVDAAQSIQAQTISNLYLALENDLEIIPVLNKVDLPSANPEEVSDDIIDLLGCKLEDIIHASGKTGFGVENILAAIIEKIPHPKGNIEEPLQALIFDSHYNPFRGIEVIFRVKNGQIKKGQKIKFMATGNEYFADEIGTLKLNQVPKNVISAGDVGYLISGIKEAKEVKVGDTLTDAKTPTTNMIVGFEDVKPMVFAGIYPVDTDDYEELRNSMEKLQLNDASLVFAAESSAALGFGFRCGFLGMLHMEIIQERLEREFNMTVITTVPNVSYLAYTKKEPEVGMIVNNPTDLPEPSKLDRVEEPYIKATIITKADFVGNVMGLCIEKRGVITNQTYLTTERVELNFDMPLAEIVFDFYDRLKTVSKGYASFDYSPIGMRTSKLVKLDVLLNATSVDALSALIHESNAYHIGKKMCEKLKELIPRQQFDIPIQAAIGAKIIARETIKALRKDVTAKCYGGDISRKRKLLEKQKKGKKRMRLVGNVEIPQEAFMAVLKLND.

Residues 2–183 (KHIRNFCIIA…AIIEKIPHPK (182 aa)) enclose the tr-type G domain. GTP-binding positions include 14 to 19 (DHGKST) and 130 to 133 (NKVD).

This sequence belongs to the TRAFAC class translation factor GTPase superfamily. Classic translation factor GTPase family. LepA subfamily.

The protein localises to the cell inner membrane. The enzyme catalyses GTP + H2O = GDP + phosphate + H(+). Its function is as follows. Required for accurate and efficient protein synthesis under certain stress conditions. May act as a fidelity factor of the translation reaction, by catalyzing a one-codon backward translocation of tRNAs on improperly translocated ribosomes. Back-translocation proceeds from a post-translocation (POST) complex to a pre-translocation (PRE) complex, thus giving elongation factor G a second chance to translocate the tRNAs correctly. Binds to ribosomes in a GTP-dependent manner. This is Elongation factor 4 from Flavobacterium psychrophilum (strain ATCC 49511 / DSM 21280 / CIP 103535 / JIP02/86).